The following is an 82-amino-acid chain: Consomatin Ro2 (82 aa).

A signal peptide spans 1-22 (MQTAYWLMVMMMVWITAPLYEG). Positions 23-57 (GKPNDVIRGLVPDDLTPQFILRSLISRRRSDKDVR) are excised as a propeptide. C62 and C68 form a disulfide bridge. D-tryptophan is present on W64. 4-hydroxyproline occurs at positions 69 and 70. A propeptide spanning residues 72–82 (LWRRHDRKGKD) is cleaved from the precursor.

Belongs to the conotoxin C superfamily. Consomatin family. As to expression, expressed by the venom duct.

It localises to the secreted. In terms of biological role, moderately activates human somatostatin receptors (SSTR) with a preferential activation of SSTR1 and SSTR4. In vivo, does not cause behavioral changes in mice within a few minutes of intracranial injection, but causes a progressive loss of movement thereafter. Four to five hours after injection, mice recover, even with the highest dose tested. Shows antinociception and antihyperalgesia activities in two mouse models of acute pain, most probably by acting outside the central nervous system. This Conus rolani (Cone snail) protein is Consomatin Ro2.